The primary structure comprises 259 residues: Type III pantothenate kinase (259 aa).

6 to 13 (DCGNTNTL) lines the ATP pocket. 108 to 111 (GADR) is a substrate binding site. D110 serves as the catalytic Proton acceptor. D130 lines the K(+) pocket. T133 contributes to the ATP binding site. A substrate-binding site is contributed by T185.

This sequence belongs to the type III pantothenate kinase family. In terms of assembly, homodimer. The cofactor is NH4(+). K(+) is required as a cofactor.

It is found in the cytoplasm. It catalyses the reaction (R)-pantothenate + ATP = (R)-4'-phosphopantothenate + ADP + H(+). It functions in the pathway cofactor biosynthesis; coenzyme A biosynthesis; CoA from (R)-pantothenate: step 1/5. Catalyzes the phosphorylation of pantothenate (Pan), the first step in CoA biosynthesis. The chain is Type III pantothenate kinase from Maricaulis maris (strain MCS10) (Caulobacter maris).